A 208-amino-acid polypeptide reads, in one-letter code: FMN-dependent NADH:quinone oxidoreductase 1 (208 aa).

It belongs to the azoreductase type 1 family. Homodimer. FMN serves as cofactor.

It carries out the reaction 2 a quinone + NADH + H(+) = 2 a 1,4-benzosemiquinone + NAD(+). The enzyme catalyses N,N-dimethyl-1,4-phenylenediamine + anthranilate + 2 NAD(+) = 2-(4-dimethylaminophenyl)diazenylbenzoate + 2 NADH + 2 H(+). Functionally, quinone reductase that provides resistance to thiol-specific stress caused by electrophilic quinones. Its function is as follows. Also exhibits azoreductase activity. Catalyzes the reductive cleavage of the azo bond in aromatic azo compounds to the corresponding amines. This Bacillus cereus (strain ATCC 14579 / DSM 31 / CCUG 7414 / JCM 2152 / NBRC 15305 / NCIMB 9373 / NCTC 2599 / NRRL B-3711) protein is FMN-dependent NADH:quinone oxidoreductase 1.